Reading from the N-terminus, the 428-residue chain is Spliceosome RNA helicase Ddx39b (428 aa).

A compositionally biased stretch (acidic residues) spans 1–19; sequence MAENDVDNELLDYEDDEVE. A disordered region spans residues 1-31; that stretch reads MAENDVDNELLDYEDDEVETAAGADGTEAPA. An N-acetylalanine modification is found at Ala-2. At Lys-36 the chain carries N6-acetyllysine; alternate. A Glycyl lysine isopeptide (Lys-Gly) (interchain with G-Cter in SUMO2); alternate cross-link involves residue Lys-36. Phosphoserine occurs at positions 38 and 41. The short motif at 45–73 is the Q motif element; sequence SGFRDFLLKPELLRAIVDCGFEHPSEVQH. Positions 76–249 constitute a Helicase ATP-binding domain; sequence IPQAILGMDV…RKFMQDPMEI (174 aa). Residue 89 to 96 participates in ATP binding; it reads AKSGMGKT. At Thr-172 the chain carries Phosphothreonine. Positions 196–199 match the DECD box motif; sequence DECD. The Helicase C-terminal domain maps to 261-422; sequence GLQQYYVKLK…ELPDEIDISS (162 aa).

The protein belongs to the DEAD box helicase family. DECD subfamily. Homodimer, and heterodimer with DDX39A. DDX39B interacts with the THO subcomplex to form the THO-DDX39B complex which multimerizes into a 28-subunit tetrameric assembly. Component of the transcription/export (TREX) complex at least composed of ALYREF/THOC4, DDX39B, SARNP/CIP29, CHTOP and the THO subcomplex; in the complex interacts with THOC2. THOC1-THOC2-THOC3-DDX39B subcomplex is sufficient for the interaction with export factor NXF1-NXT1. TREX seems to have a dynamic structure involving ATP-dependent remodeling. Within the TREX complex bridges ALYREF/THOC4 and the THO subcomplex, and, in a ATP-dependent manner, ALYREF/THOC4 and SARNP/CIP29. Component of the spliceosome. Interacts directly with U2AF2. Interacts with RBM8A, RNPS1 and SRRM1, FYTTD1/UIF, THOC1, MX1 and POLDIP3. Interacts with LUZP4. Interacts with SARNP/CIP29 (via the C-terminal domain); the interaction is direct and facilitates RNA binding of DDX39B.

Its subcellular location is the nucleus. The protein resides in the nucleus speckle. It is found in the cytoplasm. It catalyses the reaction ATP + H2O = ADP + phosphate + H(+). Functionally, involved in nuclear export of spliced and unspliced mRNA. Component of the TREX complex which is thought to couple mRNA transcription, processing and nuclear export, and specifically associates with spliced mRNA and not with unspliced pre-mRNA. The TREX complex is recruited to spliced mRNAs by a transcription-independent mechanism, binds to mRNA upstream of the exon-junction complex (EJC) and is recruited in a splicing- and cap-dependent manner to a region near the 5' end of the mRNA where it functions in mRNA export to the cytoplasm via the TAP/NXF1 pathway. The THOC1-THOC2-THOC3 core complex alone is sufficient to promote ATPase activity of DDX39B; in the complex THOC2 is the only component that directly interacts with DDX39B. Associates with SARNP/CIP29, which facilitates RNA binding of DDX39B and likely plays a role in mRNA export. May undergo several rounds of ATP hydrolysis during assembly of TREX to drive subsequent loading of components such as ALYREF/THOC4 and CHTOP onto mRNA. Also associates with pre-mRNA independent of ALYREF/THOC4. Involved in the nuclear export of intronless mRNA; the ATP-bound form is proposed to recruit export adapter ALYREF/THOC4 to intronless mRNA; its ATPase activity is cooperatively stimulated by RNA and ALYREF/THOC4 and ATP hydrolysis is thought to trigger the dissociation from RNA to allow the association of ALYREF/THOC4 and the NXF1-NXT1 heterodimer. Involved in transcription elongation and genome stability. Splice factor that is required for the first ATP-dependent step in spliceosome assembly and for the interaction of U2 snRNP with the branchpoint. Has both RNA-stimulated ATP binding/hydrolysis activity and ATP-dependent RNA unwinding activity. Even with the stimulation of RNA, the ATPase activity is weak. Can only hydrolyze ATP but not other NTPs. The RNA stimulation of ATPase activity does not have a strong preference for the sequence and length of the RNA. However, ssRNA stimulates the ATPase activity much more strongly than dsRNA. Can unwind 5' or 3' overhangs or blunt end RNA duplexes in vitro. The ATPase and helicase activities are not influenced by U2AF2; the effect of ALYREF/THOC4 is reported conflictingly. This chain is Spliceosome RNA helicase Ddx39b (Ddx39b), found in Mus musculus (Mouse).